A 990-amino-acid polypeptide reads, in one-letter code: Type III restriction-modification enzyme StyLTI Res subunit (990 aa).

The segment at 50–545 (NIDVKMETGT…GLRLPVDENG (496 aa)) is helicase-like domain. A VRR-NUC domain is found at 884-970 (LLKYDYPQQV…RQNINVEFAE (87 aa)). The tract at residues 913-937 (STTPDFVYRIERQDADSVYLLVETK) is endonuclease domain.

This sequence belongs to the type III restriction-modification system Res protein family. Contains two different subunits: Res and Mod. The cofactor is Mg(2+). Requires S-adenosyl-L-methionine as cofactor.

It carries out the reaction Endonucleolytic cleavage of DNA to give specific double-stranded fragments with terminal 5'-phosphates.. In terms of biological role, a type III restriction enzyme that recognizes 2 inversely oriented double-stranded sequences 5'-CAGAG-3' and cleaves DNA 25-27 base pairs downstream. After binding to one recognition site undergoes random one-dimensional diffusion along DNA until it collides with a stationary enzyme bound to the second DNA site, which is when DNA cleavage occurs. DNA restriction requires both the Res and Mod subunits. The polypeptide is Type III restriction-modification enzyme StyLTI Res subunit (Salmonella typhimurium (strain LT2 / SGSC1412 / ATCC 700720)).